A 154-amino-acid polypeptide reads, in one-letter code: uncharacterized protein (154 aa).

The first 19 residues, 1-19, serve as a signal peptide directing secretion; it reads MWSLKSTLCIALLVTYSVA. ShKT domains follow at residues 67–102 and 113–150; these read CADD…CGFC and CVDS…CKLC. 6 cysteine pairs are disulfide-bonded: Cys67–Cys102, Cys75–Cys95, Cys82–Cys99, Cys113–Cys150, Cys120–Cys143, and Cys129–Cys147.

This is an uncharacterized protein from Caenorhabditis elegans.